A 697-amino-acid chain; its full sequence is General transcription factor IIH subunit 1 (697 aa).

The span at 115–136 shows a compositional bias: low complexity; sequence LPVSASNGSNTTSPTNGTSPIN. 2 disordered regions span residues 115–141 and 228–250; these read LPVSASNGSNTTSPTNGTSPINGTSPT and KNDSTRSEKQHTGMPSNLLADVR. BSD domains are found at residues 174–231 and 255–307; these read LSKL…KNDS and TPNA…YFYR. Positions 412–422 are enriched in basic and acidic residues; sequence KNLKKTKKDEN. The disordered stretch occupies residues 412–462; it reads KNLKKTKKDENSTSTPTTTTTTTNTTNTTNTTTTTTTNNTTIKDPNLYNGD. The span at 423–452 shows a compositional bias: low complexity; the sequence is STSTPTTTTTTTNTTNTTNTTTTTTTNNTT.

The protein belongs to the TFB1 family. Component of the 7-subunit TFIIH core complex composed of XPB/repB, XPD/repD, gtf2h1, gtf2h2, gtf2h3, gtf2h4 and gtf2h5, which is active in NER. The core complex associates with the 3-subunit CDK-activating kinase (CAK) module composed of cycH/cyclin H, cdk7 and mnat1 to form the 10-subunit holoenzyme (holo-TFIIH) active in transcription.

The protein resides in the nucleus. In terms of biological role, component of the general transcription and DNA repair factor IIH (TFIIH) core complex, which is involved in general and transcription-coupled nucleotide excision repair (NER) of damaged DNA and, when complexed to CAK, in RNA transcription by RNA polymerase II. In NER, TFIIH acts by opening DNA around the lesion to allow the excision of the damaged oligonucleotide and its replacement by a new DNA fragment. In transcription, TFIIH has an essential role in transcription initiation. When the pre-initiation complex (PIC) has been established, TFIIH is required for promoter opening and promoter escape. Phosphorylation of the C-terminal tail (CTD) of the largest subunit of RNA polymerase II by the kinase module CAK controls the initiation of transcription. This is General transcription factor IIH subunit 1 (gtf2h1) from Dictyostelium discoideum (Social amoeba).